Here is a 382-residue protein sequence, read N- to C-terminus: MASNQHIGASNLNENEAILTNRVAELERRMSMFEGIFHALSNRLDLHFKKYDVVVNSQQQQINELTAFLSTLLNDQQRHAEILSEKLSGTLHGVSATSISLSQTLDPQGFTDGTTAPGAPRNYTSVPMNNDQTAHPQNEGAVSNETLFEDILNGNSQENDKSQQQTNSSNSISQENNSTNPSVDTRFNKPQNYNSNLVPSLEEYSANPPNNDGGQSQGLYISSNSSQSRQSPNLQKVSPNHENAVESNAQESVPTFEEEQYETKTGLKRKRIVCTRPFEFIKSPHSVMEVWKEYTEGVNGQPSIRKMEALYQTAWRRDPAVNKRYSRRKVLWKAIQTGLNRGYSLNYVVEILENSRYVNDKQKVKQPIGWLCHSSHIPETLK.

Residues 12 to 26 (LNENEAILTNRVAEL) form a leucine-zipper region. Composition is skewed to polar residues over residues 104-114 (TLDPQGFTDGT) and 122-138 (NYTSVPMNNDQTAHPQN). Disordered stretches follow at residues 104–138 (TLDPQGFTDGTTAPGAPRNYTSVPMNNDQTAHPQN) and 155–260 (NSQE…EEEQ). Low complexity predominate over residues 162–180 (SQQQTNSSNSISQENNSTN). 2 stretches are compositionally biased toward polar residues: residues 181–198 (PSVDTRFNKPQNYNSNLV) and 207–221 (NPPNNDGGQSQGLYI). Residues 222–231 (SSNSSQSRQS) show a composition bias toward low complexity. A compositionally biased stretch (polar residues) spans 232–253 (PNLQKVSPNHENAVESNAQESV). A Nuclear localization signal motif is present at residues 266 to 271 (GLKRKR).

It localises to the nucleus. Functionally, may function as a transcriptional activator. Increased dosage of MSN1 restores invertase expression in yeast mutants defective in the SNF1 protein kinase, and msn1 disruption reduced derepression of invertase in the wild-type. May affect SUC2 expression. Expression of MSN1 enhances growth in iron-limiting conditions. This is Protein MSN1 (MSN1) from Saccharomyces cerevisiae (strain ATCC 204508 / S288c) (Baker's yeast).